We begin with the raw amino-acid sequence, 33 residues long: MRSEQISGSSLNPSCRFSSAYSPVTRQRKDMSR.

Over residues 1-25 (MRSEQISGSSLNPSCRFSSAYSPVT) the composition is skewed to polar residues. Residues 1 to 33 (MRSEQISGSSLNPSCRFSSAYSPVTRQRKDMSR) are disordered.

This chain is rho operon leader peptide (rhoL), found in Escherichia coli O157:H7.